The chain runs to 77 residues: Acyl carrier protein (77 aa).

Residues 4 to 77 (SETFEKVKKI…TVQAAVDXIN (74 aa)) form the Carrier domain. Serine 40 bears the O-(pantetheine 4'-phosphoryl)serine mark.

This sequence belongs to the acyl carrier protein (ACP) family. 4'-phosphopantetheine is transferred from CoA to a specific serine of apo-ACP by AcpS. This modification is essential for activity because fatty acids are bound in thioester linkage to the sulfhydryl of the prosthetic group.

It localises to the cytoplasm. The protein operates within lipid metabolism; fatty acid biosynthesis. Functionally, carrier of the growing fatty acid chain in fatty acid biosynthesis. This is Acyl carrier protein from Anabaena variabilis.